A 179-amino-acid polypeptide reads, in one-letter code: Large ribosomal subunit protein uL5 (179 aa).

Belongs to the universal ribosomal protein uL5 family. As to quaternary structure, part of the 50S ribosomal subunit; part of the 5S rRNA/L5/L18/L25 subcomplex. Contacts the 5S rRNA and the P site tRNA. Forms a bridge to the 30S subunit in the 70S ribosome.

In terms of biological role, this is one of the proteins that bind and probably mediate the attachment of the 5S RNA into the large ribosomal subunit, where it forms part of the central protuberance. In the 70S ribosome it contacts protein S13 of the 30S subunit (bridge B1b), connecting the 2 subunits; this bridge is implicated in subunit movement. Contacts the P site tRNA; the 5S rRNA and some of its associated proteins might help stabilize positioning of ribosome-bound tRNAs. In Salmonella arizonae (strain ATCC BAA-731 / CDC346-86 / RSK2980), this protein is Large ribosomal subunit protein uL5.